The primary structure comprises 190 residues: Calcium-binding protein NCS-1 (190 aa).

Residue G2 is the site of N-myristoyl glycine attachment. 4 consecutive EF-hand domains span residues 40–58 (SGHLNKSEFQKIYKQFFPF), 60–95 (DPSAFAEYVFNVFDADKNGYIDFKEFICALSVTSRG), 96–131 (ELNDKLIWAFQLYDLDNNGLISYDEMLRIVDAIYKM), and 144–179 (TPEKRVNKIFNMMDKNKDGQLTLEEFCEGSKRDPTI). The Ca(2+) site is built by D73, D75, N77, Y79, E84, D109, D111, N113, E120, D157, N159, D161, Q163, and E168.

The protein belongs to the recoverin family.

It localises to the membrane. Functionally, negatively regulates sporulation perhaps by controlling Ca(2+)-dependent desensitization of git3. In Schizosaccharomyces pombe (strain 972 / ATCC 24843) (Fission yeast), this protein is Calcium-binding protein NCS-1 (ncs1).